The primary structure comprises 130 residues: Small ribosomal subunit protein uS11 (130 aa).

The protein belongs to the universal ribosomal protein uS11 family. Part of the 30S ribosomal subunit. Interacts with proteins S7 and S18. Binds to IF-3.

Functionally, located on the platform of the 30S subunit, it bridges several disparate RNA helices of the 16S rRNA. Forms part of the Shine-Dalgarno cleft in the 70S ribosome. This is Small ribosomal subunit protein uS11 from Prochlorococcus marinus (strain MIT 9215).